Here is a 192-residue protein sequence, read N- to C-terminus: Peptide deformylase 1 (192 aa).

Residues C101 and H143 each coordinate Fe cation. The active site involves E144. A Fe cation-binding site is contributed by H147.

It belongs to the polypeptide deformylase family. Fe(2+) serves as cofactor.

It catalyses the reaction N-terminal N-formyl-L-methionyl-[peptide] + H2O = N-terminal L-methionyl-[peptide] + formate. Removes the formyl group from the N-terminal Met of newly synthesized proteins. Requires at least a dipeptide for an efficient rate of reaction. N-terminal L-methionine is a prerequisite for activity but the enzyme has broad specificity at other positions. This is Peptide deformylase 1 from Prochlorococcus marinus (strain MIT 9313).